Here is a 216-residue protein sequence, read N- to C-terminus: CRIB domain-containing protein RIC7 (216 aa).

Positions 36-49 (IGNPTDVKHVAHIG) constitute a CRIB domain. The tract at residues 52 to 216 (GPSDNATAPS…PQFEDDRNGF (165 aa)) is disordered. Basic and acidic residues predominate over residues 108–121 (SSSEKGSPTKERSD).

As to quaternary structure, interacts with ARAC4/ROP2 and ARAC11/ROP1. As to expression, expressed in roots, leaves, guard cells, stems, flowers, siliques and pollen.

It localises to the nucleus. The protein localises to the cytoplasm. Its subcellular location is the cell membrane. In terms of biological role, functions as a downstream effector of Rho-related GTP binding proteins of the 'Rho of Plants' (ROPs) family. Participates in the propagation of ROP GTPase signals in specific cellular responses. Functions as a downstream effector of active ARAC4/ROP2 GTPase which is involved in the prevention of excessive stomatal opening upon light stimulation. Is involved in pollen tube growth regulation through its interaction with ARAC11/ROP1. In Arabidopsis thaliana (Mouse-ear cress), this protein is CRIB domain-containing protein RIC7 (RIC7).